A 74-amino-acid polypeptide reads, in one-letter code: MESNFLLFIVQQNLFDHYIISIVSNRIIGIRASTRKVEYQFFLAFKSFPSIMGRTSPKFHIINKHFLSLFKREK.

This is an uncharacterized protein from Schizosaccharomyces pombe (strain 972 / ATCC 24843) (Fission yeast).